The chain runs to 318 residues: Glutathione synthetase (318 aa).

Positions 129 to 314 (KLAITEFPDL…VPEMFAVALE (186 aa)) constitute an ATP-grasp domain. 155–211 (HAAQGDVIVKPLDDMGGTGIFRLQRSEPNLNAILETLTDNGTRTIMAQRYIPEIVKG) contributes to the ATP binding site. The Mg(2+) site is built by Glu285 and Asn287.

It belongs to the prokaryotic GSH synthase family. The cofactor is Mg(2+). Mn(2+) is required as a cofactor.

It catalyses the reaction gamma-L-glutamyl-L-cysteine + glycine + ATP = glutathione + ADP + phosphate + H(+). It participates in sulfur metabolism; glutathione biosynthesis; glutathione from L-cysteine and L-glutamate: step 2/2. The sequence is that of Glutathione synthetase from Bordetella pertussis (strain Tohama I / ATCC BAA-589 / NCTC 13251).